Reading from the N-terminus, the 350-residue chain is Solute carrier family 35 member E4 (350 aa).

The next 8 membrane-spanning stretches (helical) occupy residues 40–60 (VLGQ…LLAG), 79–99 (PLLL…WGAQ), 110–130 (VLLL…GLST), 135–155 (LAQL…ALLL), 218–238 (VTLL…AALV), 258–278 (VLLS…LLAL), 279–299 (TSAL…LILS), and 301–321 (LLFG…TLSG). The EamA domain maps to 125–179 (NVGLSTVPLDLAQLATTTTPLFTLALSALLLGRRHHPLQFAAMGPLCLGAACSLA).

Belongs to the TPT transporter family. SLC35E subfamily.

It is found in the membrane. Putative transporter. The sequence is that of Solute carrier family 35 member E4 (Slc35e4) from Rattus norvegicus (Rat).